The primary structure comprises 329 residues: Glycerol-3-phosphate dehydrogenase [NAD(P)+] (329 aa).

Residues W11 and K101 each coordinate NADPH. Sn-glycerol 3-phosphate is bound by residues K101, G132, and S134. A136 lines the NADPH pocket. Positions 188, 241, 251, 252, and 253 each coordinate sn-glycerol 3-phosphate. K188 (proton acceptor) is an active-site residue. Position 252 (R252) interacts with NADPH. E278 contacts NADPH.

This sequence belongs to the NAD-dependent glycerol-3-phosphate dehydrogenase family.

The protein resides in the cytoplasm. The enzyme catalyses sn-glycerol 3-phosphate + NAD(+) = dihydroxyacetone phosphate + NADH + H(+). The catalysed reaction is sn-glycerol 3-phosphate + NADP(+) = dihydroxyacetone phosphate + NADPH + H(+). It participates in membrane lipid metabolism; glycerophospholipid metabolism. Functionally, catalyzes the reduction of the glycolytic intermediate dihydroxyacetone phosphate (DHAP) to sn-glycerol 3-phosphate (G3P), the key precursor for phospholipid synthesis. This Onion yellows phytoplasma (strain OY-M) protein is Glycerol-3-phosphate dehydrogenase [NAD(P)+].